We begin with the raw amino-acid sequence, 312 residues long: Ribosomal protein L11 methyltransferase (312 aa).

The S-adenosyl-L-methionine site is built by threonine 162, glycine 183, aspartate 205, and asparagine 248.

The protein belongs to the methyltransferase superfamily. PrmA family.

It is found in the cytoplasm. The enzyme catalyses L-lysyl-[protein] + 3 S-adenosyl-L-methionine = N(6),N(6),N(6)-trimethyl-L-lysyl-[protein] + 3 S-adenosyl-L-homocysteine + 3 H(+). Functionally, methylates ribosomal protein L11. In Geobacillus thermodenitrificans (strain NG80-2), this protein is Ribosomal protein L11 methyltransferase.